Consider the following 340-residue polypeptide: DNA-directed RNA polymerase subunit alpha (340 aa).

The interval 1-237 (MSSDELVYMN…EQMNPFINFD (237 aa)) is alpha N-terminal domain (alpha-NTD). The tract at residues 256 to 340 (FNENLYRSVD…PEEDQIKEGE (85 aa)) is alpha C-terminal domain (alpha-CTD).

The protein belongs to the RNA polymerase alpha chain family. In terms of assembly, homodimer. The RNAP catalytic core consists of 2 alpha, 1 beta, 1 beta' and 1 omega subunit. When a sigma factor is associated with the core the holoenzyme is formed, which can initiate transcription.

The catalysed reaction is RNA(n) + a ribonucleoside 5'-triphosphate = RNA(n+1) + diphosphate. In terms of biological role, DNA-dependent RNA polymerase catalyzes the transcription of DNA into RNA using the four ribonucleoside triphosphates as substrates. This chain is DNA-directed RNA polymerase subunit alpha, found in Desulforapulum autotrophicum (strain ATCC 43914 / DSM 3382 / VKM B-1955 / HRM2) (Desulfobacterium autotrophicum).